Consider the following 230-residue polypeptide: Triggering receptor expressed on myeloid cells 1 (230 aa).

Residues 1 to 20 (MRKAGLWGLLCVFFVSEVKA) form the signal peptide. An Ig-like V-type domain is found at 21–124 (AIVLEEERYD…IYHPPNDPVV (104 aa)). The Extracellular segment spans residues 21–202 (AIVLEEERYD…TDADSVSTSS (182 aa)). A disulfide bridge connects residues cysteine 41 and cysteine 113. N-linked (GlcNAc...) asparagine glycosylation is present at asparagine 191. A helical transmembrane segment spans residues 203 to 223 (VTISVICGLLSKSLVFIILFI). Residues 224-230 (VTKRTFG) are Cytoplasmic-facing.

As to quaternary structure, monomer. Homomultimer; when activated. Interacts with TYROBP/DAP12. Interacts with TLR4.

It localises to the cell membrane. Cell surface receptor that plays important roles in innate and adaptive immunity by amplifying inflammatory responses. Upon activation by various ligands such as PGLYRP1, HMGB1 or HSP70, multimerizes and forms a complex with transmembrane adapter TYROBP/DAP12. In turn, initiates a SYK-mediated cascade of tyrosine phosphorylation, activating multiple downstream mediators such as BTK, MAPK1, MAPK3 or phospholipase C-gamma. This cascade promotes the neutrophil- and macrophage-mediated release of pro-inflammatory cytokines and/or chemokines, as well as their migration and thereby amplifies inflammatory responses that are triggered by bacterial and fungal infections. By also promoting the amplification of inflammatory signals that are initially triggered by Toll-like receptor (TLR) and NOD-like receptor engagement, plays a major role in the pathophysiology of acute and chronic inflammatory diseases of different etiologies including septic shock and atherosclerosis. The sequence is that of Triggering receptor expressed on myeloid cells 1 (Trem1) from Mus musculus (Mouse).